The following is a 375-amino-acid chain: MSDFIFCYGSQNKKRLSKYIKQTKNNHKLYLSDDNYIHIKIETRIGRKYIVVDFNDSLDFINFIVRKKIYCNSKNKHNCDPLKLHSDYLNYIVQHKHYDIIKIFYKKFIPLIKSRQNLESLRFAFQNRDNLEVIKYIFKCGSLEDTKELIIDAFIKIPNITMEFMDDIISIYKHKFTKVFMTNGLYTPVTLKIDLDYFLKPAFRTDDVNLFDIIVEELSTLTDEIDKTKLDKKQLEYLKFFDTTLNAGDINSILYHDLIYNINNPKDKSHNYYCPNIFRRMIFSLDNINLLRDNVFDILTLDLIEYANILCDFIGNNDPGFIEMMFIYAKSTEMAQLLIDSGVDYEALYKSNKLYRSEPVVKKLVNRLIKENANS.

This sequence belongs to the mimivirus L17x/L18x family.

This is an uncharacterized protein from Acanthamoeba polyphaga (Amoeba).